Reading from the N-terminus, the 262-residue chain is Indole-3-glycerol phosphate synthase (262 aa).

The protein belongs to the TrpC family.

The enzyme catalyses 1-(2-carboxyphenylamino)-1-deoxy-D-ribulose 5-phosphate + H(+) = (1S,2R)-1-C-(indol-3-yl)glycerol 3-phosphate + CO2 + H2O. It functions in the pathway amino-acid biosynthesis; L-tryptophan biosynthesis; L-tryptophan from chorismate: step 4/5. This Dechloromonas aromatica (strain RCB) protein is Indole-3-glycerol phosphate synthase.